The chain runs to 107 residues: Iron-binding protein IscA (107 aa).

Fe cation is bound by residues Cys-35, Cys-99, and Cys-101.

This sequence belongs to the HesB/IscA family. In terms of assembly, homodimer; may form tetramers and higher multimers. Fe cation is required as a cofactor.

Its function is as follows. Is able to transfer iron-sulfur clusters to apo-ferredoxin. Multiple cycles of [2Fe2S] cluster formation and transfer are observed, suggesting that IscA acts catalytically. Recruits intracellular free iron so as to provide iron for the assembly of transient iron-sulfur cluster in IscU in the presence of IscS, L-cysteine and the thioredoxin reductase system TrxA/TrxB. The protein is Iron-binding protein IscA of Klebsiella pneumoniae subsp. pneumoniae (strain ATCC 700721 / MGH 78578).